The following is a 443-amino-acid chain: Trihelix transcription factor ASIL2 (443 aa).

Residues 1–82 (MEDDEDIRSQ…RPTGGGGRED (82 aa)) are disordered. Residues 38–48 (YSLTPPGNSSQ) show a composition bias toward polar residues. Positions 64-78 (SGGGNNSSGRPTGGG) are enriched in gly residues. In terms of domain architecture, Myb-like spans 84 to 144 (WSEAATAVLI…QCKNRIDTVK (61 aa)). Disordered regions lie at residues 238 to 350 (FGGS…GNKW) and 413 to 443 (RRMGNTSNDHHHSRKNNINAIVNNNNDLGNN). The span at 239 to 249 (GGSGGGGGGGS) shows a compositional bias: gly residues. The span at 271–286 (TLPQQGRTLPQQQQQG) shows a compositional bias: low complexity. Residues 290-303 (KRCSESKRWRFRKR) carry the Bipartite nuclear localization signal motif. Residues 333–350 (MKTEEKKKQDGDGVGNKW) are compositionally biased toward basic and acidic residues. The stretch at 360–414 (FGEAYEQTENAKLQQVVEMEKERMKFLKELELQRMQFFVKTQLEISQLKQQHGRR) forms a coiled coil. Residues 428–443 (NNINAIVNNNNDLGNN) show a composition bias toward low complexity.

The protein localises to the nucleus. Its function is as follows. Transcription regulator that may repress the maturation program during early embryogenesis. The protein is Trihelix transcription factor ASIL2 of Arabidopsis thaliana (Mouse-ear cress).